Reading from the N-terminus, the 113-residue chain is Teretoxin Tan14.1 (113 aa).

The first 21 residues, 1–21 (MALEAQMTLRMFVLVAMASTV), serve as a signal peptide directing secretion. Positions 22–86 (HVLSSSFSED…DETSSRTGKR (65 aa)) are excised as a propeptide.

This sequence belongs to the teretoxin N (TN) superfamily. Post-translationally, contains 2 disulfide bonds. Expressed by the venom duct.

The protein resides in the secreted. The protein is Teretoxin Tan14.1 of Terebra anilis (Auger snail).